We begin with the raw amino-acid sequence, 529 residues long: 1,4-beta-D-glucan cellobiohydrolase xynA (529 aa).

An N-terminal signal peptide occupies residues 1–25 (MSALNSFNMYKSALILGSLLATAGA). The segment at 26-456 (QQIGTYTAET…SDIKVGPFNS (431 aa)) is catalytic. Asparagine 70 and asparagine 219 each carry an N-linked (GlcNAc...) asparagine glycan. Glutamate 234 serves as the catalytic Nucleophile. The Proton donor role is filled by glutamate 239. Residue asparagine 413 is glycosylated (N-linked (GlcNAc...) asparagine). Residues 413 to 438 (NETGTPGAARGSCPTTSGNPKTVESQ) form a disordered region. A compositionally biased stretch (polar residues) spans 425–438 (CPTTSGNPKTVESQ). N-linked (GlcNAc...) asparagine glycosylation is present at asparagine 455. Residues 457 to 493 (TFSGGTSTGGSTTTTASGTTSTKASTTSTSSTSTGTG) form a thr-rich linker region. Residues 460–491 (GGTSTGGSTTTTASGTTSTKASTTSTSSTSTG) form a disordered region. In terms of domain architecture, CBM1 spans 493–529 (GVAAHWGQCGGQGWTGPTTCASGTTCTVVNPYYSQCL). Cystine bridges form between cysteine 501–cysteine 518 and cysteine 512–cysteine 528.

The protein belongs to the glycosyl hydrolase 7 (cellulase C) family.

The protein resides in the secreted. The enzyme catalyses Hydrolysis of (1-&gt;4)-beta-D-glucosidic linkages in cellulose and cellotetraose, releasing cellobiose from the non-reducing ends of the chains.. With respect to regulation, cellobiose inhibits xynA at high concentrations. In terms of biological role, the biological conversion of cellulose to glucose generally requires three types of hydrolytic enzymes: (1) Endoglucanases which cut internal beta-1,4-glucosidic bonds; (2) Exocellobiohydrolases that cut the disaccharide cellobiose from the non-reducing end of the cellulose polymer chain; (3) Beta-1,4-glucosidases which hydrolyze the cellobiose and other short cello-oligosaccharides to glucose. The protein is 1,4-beta-D-glucan cellobiohydrolase xynA (xynA) of Talaromyces funiculosus (Fruitlet core rot fungus).